A 250-amino-acid polypeptide reads, in one-letter code: Small ribosomal subunit protein uS3z (250 aa).

In terms of domain architecture, KH type-2 spans 21 to 92 (LNEVLTRELA…SVELYAEKVN (72 aa)).

It belongs to the universal ribosomal protein uS3 family. In terms of assembly, interacts with SNRNP35.

The chain is Small ribosomal subunit protein uS3z (RPS3A) from Arabidopsis thaliana (Mouse-ear cress).